Reading from the N-terminus, the 152-residue chain is Large ribosomal subunit protein uL22 (152 aa).

Residues A124–A143 are compositionally biased toward low complexity. The segment at A124–E152 is disordered.

This sequence belongs to the universal ribosomal protein uL22 family. In terms of assembly, part of the 50S ribosomal subunit.

Its function is as follows. This protein binds specifically to 23S rRNA; its binding is stimulated by other ribosomal proteins, e.g. L4, L17, and L20. It is important during the early stages of 50S assembly. It makes multiple contacts with different domains of the 23S rRNA in the assembled 50S subunit and ribosome. The globular domain of the protein is located near the polypeptide exit tunnel on the outside of the subunit, while an extended beta-hairpin is found that lines the wall of the exit tunnel in the center of the 70S ribosome. The chain is Large ribosomal subunit protein uL22 from Salinispora arenicola (strain CNS-205).